Consider the following 103-residue polypeptide: MFEGMDLGKMGKMMEQMQEKAKELQEQAKNVEFTAKAGGGLIEVTANGAGEVIDMNIDDSLLEDKESLQILLISAMNDVNKMIEDNKKSQAMGMMGGMNPFGS.

This sequence belongs to the YbaB/EbfC family. As to quaternary structure, homodimer.

Its subcellular location is the cytoplasm. The protein localises to the nucleoid. Binds to DNA and alters its conformation. May be involved in regulation of gene expression, nucleoid organization and DNA protection. This is Nucleoid-associated protein SUN_2278 from Sulfurovum sp. (strain NBC37-1).